Reading from the N-terminus, the 284-residue chain is 8-methylmenaquinol:fumarate reductase membrane anchor subunit (284 aa).

The MFR complex is composed of three subunits: a flavoprotein (SdhA), an iron-sulfur protein (SdhB), and one hydrophobic anchor protein (SdhE).

It localises to the periplasm. Its subcellular location is the cell membrane. The enzyme catalyses 8-methylmenaquinone-6 + succinate = 8-methylmenaquinol-6 + fumarate. Membrane anchor subunit of 8-methylmenaquinol:fumarate reductase (MFR), that catalyzes the reduction of fumarate using 8-methylmenaquinol-6 as electron donor. The complex shows no succinate oxidation activity. Is involved in anaerobic metabolism. SdhE likely contains the quinol/quinone binding site. The protein is 8-methylmenaquinol:fumarate reductase membrane anchor subunit of Wolinella succinogenes (strain ATCC 29543 / DSM 1740 / CCUG 13145 / JCM 31913 / LMG 7466 / NCTC 11488 / FDC 602W) (Vibrio succinogenes).